The sequence spans 303 residues: Probable 5-dehydro-4-deoxyglucarate dehydratase (303 aa).

This sequence belongs to the DapA family.

It catalyses the reaction 5-dehydro-4-deoxy-D-glucarate + H(+) = 2,5-dioxopentanoate + CO2 + H2O. Its pathway is carbohydrate acid metabolism; D-glucarate degradation; 2,5-dioxopentanoate from D-glucarate: step 2/2. The sequence is that of Probable 5-dehydro-4-deoxyglucarate dehydratase from Polaromonas naphthalenivorans (strain CJ2).